The chain runs to 374 residues: Queuine tRNA-ribosyltransferase (374 aa).

The Proton acceptor role is filled by Asp-90. Substrate is bound by residues Asp-90–Phe-94, Asp-144, Gln-193, and Gly-220. An RNA binding region spans residues Gly-251–Asp-257. Asp-270 acts as the Nucleophile in catalysis. An RNA binding; important for wobble base 34 recognition region spans residues Thr-275–Arg-279. Zn(2+)-binding residues include Cys-308, Cys-310, Cys-313, and His-339.

This sequence belongs to the queuine tRNA-ribosyltransferase family. Homodimer. Within each dimer, one monomer is responsible for RNA recognition and catalysis, while the other monomer binds to the replacement base PreQ1. Requires Zn(2+) as cofactor.

The catalysed reaction is 7-aminomethyl-7-carbaguanine + guanosine(34) in tRNA = 7-aminomethyl-7-carbaguanosine(34) in tRNA + guanine. The protein operates within tRNA modification; tRNA-queuosine biosynthesis. Its function is as follows. Catalyzes the base-exchange of a guanine (G) residue with the queuine precursor 7-aminomethyl-7-deazaguanine (PreQ1) at position 34 (anticodon wobble position) in tRNAs with GU(N) anticodons (tRNA-Asp, -Asn, -His and -Tyr). Catalysis occurs through a double-displacement mechanism. The nucleophile active site attacks the C1' of nucleotide 34 to detach the guanine base from the RNA, forming a covalent enzyme-RNA intermediate. The proton acceptor active site deprotonates the incoming PreQ1, allowing a nucleophilic attack on the C1' of the ribose to form the product. After dissociation, two additional enzymatic reactions on the tRNA convert PreQ1 to queuine (Q), resulting in the hypermodified nucleoside queuosine (7-(((4,5-cis-dihydroxy-2-cyclopenten-1-yl)amino)methyl)-7-deazaguanosine). In Campylobacter fetus subsp. fetus (strain 82-40), this protein is Queuine tRNA-ribosyltransferase.